Consider the following 79-residue polypeptide: uncharacterized protein (79 aa).

This is an uncharacterized protein from Acidianus two-tailed virus (ATV).